Here is a 2084-residue protein sequence, read N- to C-terminus: MSDQQKASLCPRLVDYMAIVGAHTTPPMPKGLQGLKAPPVQVPDLLRRYPPSDHADFPLPLDMVYFCQPEGCTSVGPRRTGSAIRDMTSFVFALTDKDSGKTRYGICVNFYRPIERPSSAAGSAGAGNDRPGNGGPGGHGGGAGGGAGGGGRGGRRSSAFRRESWRKSMERSSDSAFSSDYRSNVAPSDSDRELTSRRDSDQQRLHSHHSHHQPHHPSASPAVPKLGLMAPSADSESGGSHSPSPRASRKRTKLRNQSLTSLCIISHHPFFTTFRECLFILKKLIDACNESSSPKRVGASQKINRDNVWTVLTGHVSDATPSIVLHDVREIETWILRLLSTPVPVPGSTRVEVEVLSPTVHEPLLFALPDHTRFSLVDFPLHLPLELLGVETCLKVWTLIMQENKVLFQSRDYNALSMSVMAFVTMLYPLEYMFPVIPLLPTCLSCAEQLLLAPTPFVIGVPASFLVYKKNFRLPDDIWVVDLDSTKLTPPTGGYEEIPPLPEPEGTILKNHLKQALTSMTATNTAVSSQQLLPSVRDSLQEPPLLGVSQVRLPLQTPPHSAQASQRNSMSAQGTISSRQPSPMNSPALNPFVYGTDVDSVDVATRVAMVRFFNAQNTLANFAEHTRTLRLYPRPVVAFQINSFLRSRPRASQFLNQFARTQAVEFLAEWSLTPTNVAFLRVQTGVMDPMQVGDKPKWFAHALTPIRFSVWDDGSSLNGALRSLKQLECQPTDESGSDSEGADSSSSSYSSLSDFVSEMASSDLSPSLHDVFGSYNRPHVVPQTLSSNLDPALVYHPPSKLQYPEGIADAVASKEEEDEERADSPVSSSSSRSDLSSPSFNRDSEFDFQPKGGQTLGSTTVGSGAAAPSFELATPLAMRLEATIKMASIEQESDTVSTATGKTIAAGSKLQRHPSDSESRPEKKIPPPLTPPVKQPGVSNILARTGSSGSSSSSPGRQSSQSSLFENFASHAKELVRETTRQSSQEGLLAHVDKFTLHAKKAAGEASKQALEVSKQAAGVSKNTLEDLTYVGKSTLGDLTKTAKEAATKKGIIKIEEHSAGGAGPPPKSPGSQLATHKQVQQSGGQGGGNNFFSAIGTDFNGLASSTSTMFSGMFGKKSQQKQVPVQQKQPNVSAGKAKSGINFDPFPGRKGLVERTPLIKHSGPRQTQEELTRQQNQERSHSNAENQTFLKDVTNQVLAGEGVGWLKLNRFKKLMEDESYRTLVLSKLNKTLDKKIAPDDHIDDVCVTKPVWKGMLKCIQAIAGGLDVTFANFGLGGMASVFQLMEVAHTHYWSKEINEGSDMSSSLLSSHAASPMGSRENLRSPSSPNGSHSALGSEWASPQESRKSSTQLAHGGPGGSHSGAPINRRLSSADSQDGQSTTEMFKDMLSQKRSALKNMLTSFDSDTTTSKDSKKSSGNLWSGKSTLSAGFRYTGGHLINTSSSPSPDSPRVYLFEGLLGKDRLNLWNQMQFWEDAFLDAVSQERDMIGMDQGPIEMMERYKSLSESERKRLEHDEDRLLSTMLYNLTAILVMLNVAKDEIRRKIRRLLGKSHIGLVYSQEVHNVVDQINNLNGNDIDLKPLGSRLLHRQSFTVHQGTDVNGPLRFMEVRDDGLVLRSVDGTIVERWWYERLVNMTYSPKTKLLCLWRRNGGQTQLHKYYTRKCKELYNCIKEAMERGGTPTNVPELGGEFPVQDMNTGEGGLLQVCLEGVGLLFSNSKFFVRLDHIRKCFTQKGGIFVLEEYNPKTRNLIQRKYQSSMSDQICYSVLCVFSYVAAGQDQKKNPVVITPQIQDIHAQQKQKHQQQQQHQQPQQQQQPHQTTTQQNQPTAVASAVPTTTAPAGQVNPNRMTAKSQAGSISIRHTVPMQKPTITMSTVQPQARMPAQVATASVPVTVPVPPTPAPPTSNPAKLPQLPPRVPSQPSTESLASISSPPPKLRTPMSAPPGPPPAIPPRTGAISRSGSVPAARSFVRQASANSTPPQYTPQPPPPFVIPKRHSGLARASTLSSSTSPSMSSSSASNHPGHSQSQQRASHGSVAAVLQSMPEAEPGYGSGSGSISGSSSGSGSASGSIASASPQAHRKH.

Positions 25 to 352 constitute a uDENN domain; it reads TPPMPKGLQG…VPVPGSTRVE (328 aa). The tract at residues 117-253 is disordered; it reads PSSAAGSAGA…SPRASRKRTK (137 aa). Over residues 118-131 the composition is skewed to low complexity; that stretch reads SSAAGSAGAGNDRP. The span at 132 to 152 shows a compositional bias: gly residues; it reads GNGGPGGHGGGAGGGAGGGGR. Residues 160–173 show a composition bias toward basic and acidic residues; the sequence is FRRESWRKSMERSS. The segment covering 174-183 has biased composition (low complexity); sequence DSAFSSDYRS. Residues 189-204 are compositionally biased toward basic and acidic residues; it reads DSDRELTSRRDSDQQR. The span at 205-215 shows a compositional bias: basic residues; the sequence is LHSHHSHHQPH. The span at 234 to 245 shows a compositional bias: polar residues; it reads DSESGGSHSPSP. In terms of domain architecture, cDENN spans 373-514; the sequence is RFSLVDFPLH…EGTILKNHLK (142 aa). The region spanning 516–678 is the dDENN domain; the sequence is ALTSMTATNT…EWSLTPTNVA (163 aa). Disordered regions lie at residues 557–588, 730–749, 811–863, 891–963, 1058–1092, 1115–1188, and 1305–1382; these read TPPH…NSPA, QPTD…SSSY, VASK…TVGS, QESD…SQSS, HSAG…GNNF, FGKK…AENQ, and SSSL…GQST. Residues 558-588 are compositionally biased toward polar residues; that stretch reads PPHSAQASQRNSMSAQGTISSRQPSPMNSPA. Over residues 824–839 the composition is skewed to low complexity; it reads SPVSSSSSRSDLSSPS. Positions 913 to 925 are enriched in basic and acidic residues; sequence HPSDSESRPEKKI. Residues 946–963 show a composition bias toward low complexity; it reads GSSGSSSSSPGRQSSQSS. Low complexity predominate over residues 1121-1131; the sequence is QKQVPVQQKQP. Residues 1168–1183 are compositionally biased toward basic and acidic residues; it reads TQEELTRQQNQERSHS. Over residues 1305 to 1315 the composition is skewed to low complexity; sequence SSSLLSSHAAS. Polar residues-rich tracts occupy residues 1324–1353 and 1370–1382; these read RSPS…STQL and RLSS…GQST. In terms of domain architecture, Death spans 1490–1565; the sequence is GMDQGPIEMM…GLVYSQEVHN (76 aa). A compositionally biased stretch (low complexity) spans 1794-1842; sequence DIHAQQKQKHQQQQQHQQPQQQQQPHQTTTQQNQPTAVASAVPTTTAPA. 2 disordered regions span residues 1794 to 1865 and 1896 to 2084; these read DIHA…RHTV and VPVP…HRKH. Residues 1845-1858 show a composition bias toward polar residues; sequence VNPNRMTAKSQAGS. Pro residues predominate over residues 1896 to 1907; the sequence is VPVPPTPAPPTS. The span at 1921-1932 shows a compositional bias: polar residues; it reads SQPSTESLASIS. Composition is skewed to pro residues over residues 1933 to 1953 and 1983 to 1993; these read SPPP…PAIP and QYTPQPPPPFV. Low complexity-rich tracts occupy residues 2001-2029 and 2059-2077; these read LARA…HSQS and ISGS…ASAS.

This sequence belongs to the MADD family.

The protein localises to the cell membrane. It is found in the cytoplasm. Functionally, guanyl-nucleotide exchange factor that regulates small GTPases. Converts GDP-bound inactive form of Rab3 to the GTP-bound active forms. The polypeptide is MAP kinase-activating death domain protein (Drosophila melanogaster (Fruit fly)).